Consider the following 591-residue polypeptide: ATP-dependent lipid A-core flippase (591 aa).

5 helical membrane passes run 34 to 54 (LILAVLLMAGAAATQPTLAVI), 71 to 91 (IWSVPLAVIGLILLRGVCNFF), 158 to 178 (LVVISLIAVLLYMSWLLTVII), 258 to 278 (LTPLTQVCIAVAVGAVIAVAL), and 285 to 305 (TLTAGAFAAFMSALAQIFDPI). The 283-residue stretch at 35–317 (ILAVLLMAGA…LTNLASKMQK (283 aa)) folds into the ABC transmembrane type-1 domain. Residues 350-586 (IEFRQIGHRF…GGLYATLYNM (237 aa)) enclose the ABC transporter domain. 384-391 (GRSGSGKT) provides a ligand contact to ATP.

The protein belongs to the ABC transporter superfamily. Lipid exporter (TC 3.A.1.106) family. In terms of assembly, homodimer.

The protein localises to the cell inner membrane. The enzyme catalyses ATP + H2O + lipid A-core oligosaccharideSide 1 = ADP + phosphate + lipid A-core oligosaccharideSide 2.. In terms of biological role, involved in lipopolysaccharide (LPS) biosynthesis. Translocates lipid A-core from the inner to the outer leaflet of the inner membrane. Transmembrane domains (TMD) form a pore in the inner membrane and the ATP-binding domain (NBD) is responsible for energy generation. This Bordetella avium (strain 197N) protein is ATP-dependent lipid A-core flippase.